The chain runs to 336 residues: uncharacterized protein (336 aa).

The interval 196–222 is disordered; the sequence is YKEGDDSNWDDFGSESEDDSKEAHSEE. Acidic residues predominate over residues 201 to 215; that stretch reads DSNWDDFGSESEDDS. Serine 211 bears the Phosphoserine mark.

This is an uncharacterized protein from Schizosaccharomyces pombe (strain 972 / ATCC 24843) (Fission yeast).